Here is a 288-residue protein sequence, read N- to C-terminus: Diaminopimelate epimerase (288 aa).

Substrate-binding residues include asparagine 14 and asparagine 67. Catalysis depends on cysteine 76, which acts as the Proton donor. Residues 77–78, asparagine 166, asparagine 199, and 217–218 contribute to the substrate site; these read GN and ER. Catalysis depends on cysteine 226, which acts as the Proton acceptor. Position 227–228 (227–228) interacts with substrate; sequence GT.

Belongs to the diaminopimelate epimerase family. As to quaternary structure, homodimer.

It localises to the cytoplasm. It carries out the reaction (2S,6S)-2,6-diaminopimelate = meso-2,6-diaminopimelate. It participates in amino-acid biosynthesis; L-lysine biosynthesis via DAP pathway; DL-2,6-diaminopimelate from LL-2,6-diaminopimelate: step 1/1. In terms of biological role, catalyzes the stereoinversion of LL-2,6-diaminopimelate (L,L-DAP) to meso-diaminopimelate (meso-DAP), a precursor of L-lysine and an essential component of the bacterial peptidoglycan. The chain is Diaminopimelate epimerase from Bacillus cereus (strain 03BB102).